The chain runs to 335 residues: Delta(7)-sterol 5(6)-desaturase erg3B (335 aa).

Helical transmembrane passes span 74–94, 113–133, and 152–172; these read IWAF…ALVF, IGQA…LFLA, and LYTY…IYWI. The 125-residue stretch at 160-284 folds into the Fatty acid hydroxylase domain; that stretch reads LFIAFTDFAI…FITFWDRIGG (125 aa). The short motif at 173–177 is the Histidine box-1 element; the sequence is HRGLH. Residues 186–190 carry the Histidine box-2 motif; that stretch reads HKPHH. A helical transmembrane segment spans residues 219-239; the sequence is PFLFPLQKAAYLGLFVFVTIW. N-linked (GlcNAc...) asparagine glycosylation is present at Asn256. Positions 261–265 match the Histidine box-3 motif; the sequence is HTIHH.

This sequence belongs to the sterol desaturase family. Fe cation serves as cofactor.

Its subcellular location is the endoplasmic reticulum membrane. It functions in the pathway steroid metabolism; ergosterol biosynthesis. In terms of biological role, delta(7)-sterol 5(6)-desaturase; part of the third module of ergosterol biosynthesis pathway that includes the late steps of the pathway. Erg3B catalyzes the introduction of a C-5 double bond in the B ring to produce 5-dehydroepisterol. The third module or late pathway involves the ergosterol synthesis itself through consecutive reactions that mainly occur in the endoplasmic reticulum (ER) membrane. Firstly, the squalene synthase erg9 catalyzes the condensation of 2 farnesyl pyrophosphate moieties to form squalene, which is the precursor of all steroids. Squalene synthase is crucial for balancing the incorporation of farnesyl diphosphate (FPP) into sterol and nonsterol isoprene synthesis. Secondly, squalene is converted into lanosterol by the consecutive action of the squalene epoxidase erg1 and the lanosterol synthase erg7. Then, the delta(24)-sterol C-methyltransferase erg6 methylates lanosterol at C-24 to produce eburicol. Eburicol is the substrate of the sterol 14-alpha demethylase encoded by cyp51A and cyp51B, to yield 4,4,24-trimethyl ergosta-8,14,24(28)-trienol. The C-14 reductase erg24 then reduces the C14=C15 double bond which leads to 4,4-dimethylfecosterol. A sequence of further demethylations at C-4, involving the C-4 demethylation complex containing the C-4 methylsterol oxidases erg25A or erg25B, the sterol-4-alpha-carboxylate 3-dehydrogenase erg26 and the 3-keto-steroid reductase erg27, leads to the production of fecosterol via 4-methylfecosterol. The C-8 sterol isomerase erg2 then catalyzes the reaction which results in unsaturation at C-7 in the B ring of sterols and thus converts fecosterol to episterol. The sterol-C5-desaturase erg3B then catalyzes the introduction of a C-5 double bond in the B ring to produce 5-dehydroepisterol. The 2 other sterol-C5-desaturases, erg3A and erg3C, seem to be less important in ergosterol biosynthesis. The C-22 sterol desaturase erg5 further converts 5-dehydroepisterol into ergosta-5,7,22,24(28)-tetraen-3beta-ol by forming the C-22(23) double bond in the sterol side chain. Finally, ergosta-5,7,22,24(28)-tetraen-3beta-ol is substrate of the C-24(28) sterol reductases erg4A and erg4B to produce ergosterol. Possible alternative sterol biosynthetic pathways might exist from fecosterol to ergosterol, depending on the activities of the erg3 isoforms. The protein is Delta(7)-sterol 5(6)-desaturase erg3B of Aspergillus fumigatus (strain ATCC MYA-4609 / CBS 101355 / FGSC A1100 / Af293) (Neosartorya fumigata).